Consider the following 535-residue polypeptide: High affinity immunoglobulin alpha and immunoglobulin mu Fc receptor (535 aa).

A signal peptide spans 1–35 (MDQGAPAKPSEQKVPSLRTRWEILLLTLCLLHGSS). Residues 36-455 (MTPPHRRSHS…ALMEGESHTR (420 aa)) lie on the Extracellular side of the membrane. Residues 95 to 117 (GGAVTIHCHYAPSSVNRHQRKYW) are mediates immunoglobulin Fc fragment-binding. In terms of domain architecture, Ig-like V-type spans 95–189 (GGAVTIHCHY…DMLFFSVNLT (95 aa)). A disulfide bridge connects residues C102 and C173. The N-linked (GlcNAc...) asparagine glycan is linked to N187. Disordered regions lie at residues 201-360 (AAPA…LISE) and 405-430 (EGRS…QLSV). Composition is skewed to low complexity over residues 208-220 (PTTA…SSAG) and 241-253 (TVPT…TTSS). Positions 291-328 (KSRSMSSTTQGVWLWSTRNSVTPSVTTSEGRRQGTTPE) are enriched in polar residues. Residues 330–346 (DGPRDETDVRVSPEAPR) are compositionally biased toward basic and acidic residues. A compositionally biased stretch (polar residues) spans 413-429 (LENTTEESSPPTPSQLS). A helical transmembrane segment spans residues 456 to 476 (ILTPVSTVLALLLIAALILLK). Residues 477-535 (RSLGRQRTSQKKERVPRITLIQMTHFLPDKLPDEGKNFQQSNLLPPQASLTVLENDPRP) are Cytoplasmic-facing. The interval 507-535 (LPDEGKNFQQSNLLPPQASLTVLENDPRP) is disordered. Residues 513-528 (NFQQSNLLPPQASLTV) are compositionally biased toward polar residues.

Interacts with IGHM; this interaction facilitates the endocytosis of IgM-coated microbes and IgM-antigen immune complexes. In terms of processing, N-glycosylated. In terms of tissue distribution, expressed in several tissues including thymus, spleen, liver, kidney, small and large intestine, testis and placenta. Expressed by oligodendrocytes, B-cells and macrophages but not granulocytes, T-cells or NK cells (at protein level).

Its subcellular location is the cell membrane. Its function is as follows. Functions as a receptor for the Fc fragment of IgA and IgM. Binds IgA and IgM with high affinity and mediates their endocytosis. May function in the immune response to microbes mediated by IgA and IgM. The sequence is that of High affinity immunoglobulin alpha and immunoglobulin mu Fc receptor (Fcamr) from Mus musculus (Mouse).